The following is a 325-amino-acid chain: MSGSLTLLKEKHIRYIESLDTKKHNFEYWLTEHLRLNGIYWGLTALCVLDSPETFVKEEVISFVLSCWDDKYGAFAPFPRHDAHLLTTLSAVQILATYDALDVLGKDRKVRLISFIRGNQLEDGSFQGDRFGEVDTRFVYTALSALSILGELTSEVVDPAVDFVLKCYNFDGGFGLCPNAESHAAQAFTCLGALAIANKLDMLSDDQLEEIGWWLCERQLPEGGLNGRPSKLPDVCYSWWVLSSLAIIGRLDWINYEKLTEFILKCQDEKKGGISDRPENEVDVFHTVFGVAGLSLMGYDNLVPIDPIYCMPKSVTSKFKKYPYK.

6 PFTB repeats span residues K9–D50, K57–D99, K109–G150, V157–N198, L208–G249, and Y256–G298. Residues H183–A185 and R228–W240 each bind geranylgeranyl diphosphate. D234, C236, and H286 together coordinate Zn(2+).

This sequence belongs to the protein prenyltransferase subunit beta family. As to quaternary structure, heterodimer of an alpha and a beta subunit. Zn(2+) is required as a cofactor.

It carries out the reaction geranylgeranyl diphosphate + L-cysteinyl-[protein] = S-geranylgeranyl-L-cysteinyl-[protein] + diphosphate. In terms of biological role, catalyzes the transfer of a geranyl-geranyl moiety from geranyl-geranyl pyrophosphate to proteins having the C-terminal -XCC or -XCXC, where both cysteines may become modified. Acts on YPT1 and SEC4. This Saccharomyces cerevisiae (strain ATCC 204508 / S288c) (Baker's yeast) protein is Geranylgeranyl transferase type-2 subunit beta (BET2).